The sequence spans 360 residues: Geranylgeranyl pyrophosphate synthase 12, chloroplastic (360 aa).

The transit peptide at 1-39 directs the protein to the chloroplast; sequence MANTVHLSSSSLFIQTRGRKYNSILSFNNLQKRTVLSLS. Residues Lys-106, Arg-109, and His-138 each coordinate isopentenyl diphosphate. Residues Asp-145 and Asp-151 each coordinate Mg(2+). Arg-156 is a dimethylallyl diphosphate binding site. An isopentenyl diphosphate-binding site is contributed by Arg-157. Lys-245, Thr-246, Gln-283, Lys-300, and Lys-310 together coordinate dimethylallyl diphosphate.

The protein belongs to the FPP/GGPP synthase family. In terms of assembly, monomer. It depends on Mg(2+) as a cofactor.

Its subcellular location is the plastid. The protein resides in the chloroplast. The enzyme catalyses isopentenyl diphosphate + dimethylallyl diphosphate = (2E)-geranyl diphosphate + diphosphate. It catalyses the reaction isopentenyl diphosphate + (2E)-geranyl diphosphate = (2E,6E)-farnesyl diphosphate + diphosphate. It carries out the reaction isopentenyl diphosphate + (2E,6E)-farnesyl diphosphate = (2E,6E,10E)-geranylgeranyl diphosphate + diphosphate. Its pathway is isoprenoid biosynthesis; farnesyl diphosphate biosynthesis; farnesyl diphosphate from geranyl diphosphate and isopentenyl diphosphate: step 1/1. It participates in isoprenoid biosynthesis; geranyl diphosphate biosynthesis; geranyl diphosphate from dimethylallyl diphosphate and isopentenyl diphosphate: step 1/1. The protein operates within isoprenoid biosynthesis; geranylgeranyl diphosphate biosynthesis; geranylgeranyl diphosphate from farnesyl diphosphate and isopentenyl diphosphate: step 1/1. In terms of biological role, catalyzes the trans-addition of the three molecules of IPP onto DMAPP to form geranylgeranyl pyrophosphate. The polypeptide is Geranylgeranyl pyrophosphate synthase 12, chloroplastic (Arabidopsis thaliana (Mouse-ear cress)).